The chain runs to 266 residues: Hydroxyethylthiazole kinase (266 aa).

Methionine 46 is a substrate binding site. The ATP site is built by arginine 122 and serine 168. Glycine 195 lines the substrate pocket.

Belongs to the Thz kinase family. Requires Mg(2+) as cofactor.

It catalyses the reaction 5-(2-hydroxyethyl)-4-methylthiazole + ATP = 4-methyl-5-(2-phosphooxyethyl)-thiazole + ADP + H(+). The protein operates within cofactor biosynthesis; thiamine diphosphate biosynthesis; 4-methyl-5-(2-phosphoethyl)-thiazole from 5-(2-hydroxyethyl)-4-methylthiazole: step 1/1. Catalyzes the phosphorylation of the hydroxyl group of 4-methyl-5-beta-hydroxyethylthiazole (THZ). The protein is Hydroxyethylthiazole kinase of Oleidesulfovibrio alaskensis (strain ATCC BAA-1058 / DSM 17464 / G20) (Desulfovibrio alaskensis).